An 84-amino-acid polypeptide reads, in one-letter code: Large ribosomal subunit protein bL27 (84 aa).

Residues 1–21 (MAHKKGGGSTKNGRDSNPKYL) form a disordered region.

This sequence belongs to the bacterial ribosomal protein bL27 family.

The polypeptide is Large ribosomal subunit protein bL27 (Chlorobium phaeovibrioides (strain DSM 265 / 1930) (Prosthecochloris vibrioformis (strain DSM 265))).